Consider the following 206-residue polypeptide: Large ribosomal subunit protein uL4 (206 aa).

The disordered stretch occupies residues 46–78; that stretch reads GNRAQKDREQVKHTTKKPWRQKGTGRARAGMSS. Over residues 58 to 70 the composition is skewed to basic residues; it reads HTTKKPWRQKGTG.

It belongs to the universal ribosomal protein uL4 family. As to quaternary structure, part of the 50S ribosomal subunit.

In terms of biological role, one of the primary rRNA binding proteins, this protein initially binds near the 5'-end of the 23S rRNA. It is important during the early stages of 50S assembly. It makes multiple contacts with different domains of the 23S rRNA in the assembled 50S subunit and ribosome. Its function is as follows. Forms part of the polypeptide exit tunnel. This chain is Large ribosomal subunit protein uL4, found in Burkholderia cenocepacia (strain ATCC BAA-245 / DSM 16553 / LMG 16656 / NCTC 13227 / J2315 / CF5610) (Burkholderia cepacia (strain J2315)).